Consider the following 285-residue polypeptide: Small ribosomal subunit protein uS2 (285 aa).

A disordered region spans residues 229 to 285; that stretch reads AGLASGDAKPEAGAGEPLAEWEQELLAQANPNAEGSAEAAPAAATEEAPAAQTPADF. Positions 257 to 285 are enriched in low complexity; it reads ANPNAEGSAEAAPAAATEEAPAAQTPADF.

Belongs to the universal ribosomal protein uS2 family.

The polypeptide is Small ribosomal subunit protein uS2 (Nocardia farcinica (strain IFM 10152)).